Reading from the N-terminus, the 413-residue chain is Gamma-glutamyl phosphate reductase (413 aa).

The protein belongs to the gamma-glutamyl phosphate reductase family.

It localises to the cytoplasm. It carries out the reaction L-glutamate 5-semialdehyde + phosphate + NADP(+) = L-glutamyl 5-phosphate + NADPH + H(+). Its pathway is amino-acid biosynthesis; L-proline biosynthesis; L-glutamate 5-semialdehyde from L-glutamate: step 2/2. Its function is as follows. Catalyzes the NADPH-dependent reduction of L-glutamate 5-phosphate into L-glutamate 5-semialdehyde and phosphate. The product spontaneously undergoes cyclization to form 1-pyrroline-5-carboxylate. The chain is Gamma-glutamyl phosphate reductase from Salinispora arenicola (strain CNS-205).